A 346-amino-acid polypeptide reads, in one-letter code: MSGSSKQPHAKGKTLIIEDDCEAEALDEANPFSFKEFVKSQTFPGFVSSNSKRAFSKDSNQSTTQFRGPSECPDGNLEFQETYFRDPTLYDDLQEDEDDDWSGSYHPSVIENTHGPKVPSPAGTDGDESYGYGASDMSGDGLITGWQQAVLPSPPAGLHGKTQHRPDSTSDSEEGLRLLQINCEELQEENLHLKSKICKLKELNDSQNEKVRQLERKLEERILEEQKEAQDLESMVQQVEKNLQMMTKRAAKAEGNVTKLKQEMALLQIELTTYKAENEALRRGETAGMNAVKQNSNLALENLQKVVSGAQSSIKQLVAGAEALTLVAELLRSIDKIAEIHNDGVP.

The span at 46-67 shows a compositional bias: polar residues; that stretch reads FVSSNSKRAFSKDSNQSTTQFR. Disordered regions lie at residues 46-77, 93-129, and 153-173; these read FVSS…DGNL, LQED…GDES, and SPPA…SDSE. A coiled-coil region spans residues 170-317; the sequence is SDSEEGLRLL…SGAQSSIKQL (148 aa).

It belongs to the ENTR1 family.

The protein localises to the cytoplasm. The protein resides in the early endosome. Its subcellular location is the endosome. It is found in the recycling endosome. It localises to the midbody. The protein localises to the cytoskeleton. The protein resides in the microtubule organizing center. Its subcellular location is the centrosome. It is found in the cilium basal body. Its function is as follows. Endosome-associated protein that plays a role in membrane receptor sorting, cytokinesis and ciliogenesis. This is Endosome-associated-trafficking regulator 1 from Xenopus tropicalis (Western clawed frog).